Here is a 198-residue protein sequence, read N- to C-terminus: Endothelin-3 (198 aa).

The N-terminal stretch at 1-16 (MEPGLWLLFGLTVTSA) is a signal peptide. The propeptide occupies 17–86 (AGLVPCPQPG…SKGGPVHGRA (70 aa)). Residues 22–79 (CPQPGDAGKSGVPGTPPTARSEGDIQEPVAMTAVQGPSPRSPEQEQELGRFGEQASKG) form a disordered region. 2 disulfides stabilise this stretch: Cys-89-Cys-103 and Cys-91-Cys-99. Residues 110–198 (INTPEQTVPY…RGNGGLRPTR (89 aa)) constitute a propeptide that is removed on maturation. The tract at residues 150-164 (CACVQSQDSACLHFC) is endothelin-like. The interval 174 to 198 (SRTATNPDKEEEPASRGNGGLRPTR) is disordered.

The protein belongs to the endothelin/sarafotoxin family. Expressed in which included heart, lung, liver, kidney, spleen, stomach, pancreas, duodenum, colon, uterus, ovary and testis.

It is found in the secreted. In terms of biological role, endothelins are endothelium-derived vasoconstrictor peptides. The protein is Endothelin-3 (EDN3) of Canis lupus familiaris (Dog).